Here is a 237-residue protein sequence, read N- to C-terminus: Ribonuclease PH (237 aa).

Phosphate-binding positions include Arg86 and 124–126 (GTR).

This sequence belongs to the RNase PH family. As to quaternary structure, homohexameric ring arranged as a trimer of dimers.

The catalysed reaction is tRNA(n+1) + phosphate = tRNA(n) + a ribonucleoside 5'-diphosphate. In terms of biological role, phosphorolytic 3'-5' exoribonuclease that plays an important role in tRNA 3'-end maturation. Removes nucleotide residues following the 3'-CCA terminus of tRNAs; can also add nucleotides to the ends of RNA molecules by using nucleoside diphosphates as substrates, but this may not be physiologically important. Probably plays a role in initiation of 16S rRNA degradation (leading to ribosome degradation) during starvation. This chain is Ribonuclease PH, found in Methylobacterium nodulans (strain LMG 21967 / CNCM I-2342 / ORS 2060).